Reading from the N-terminus, the 198-residue chain is FMN-dependent NADH:quinone oxidoreductase 2 (198 aa).

Residue 136–139 (SRGG) participates in FMN binding.

Belongs to the azoreductase type 1 family. Homodimer. Requires FMN as cofactor.

The enzyme catalyses 2 a quinone + NADH + H(+) = 2 a 1,4-benzosemiquinone + NAD(+). It carries out the reaction N,N-dimethyl-1,4-phenylenediamine + anthranilate + 2 NAD(+) = 2-(4-dimethylaminophenyl)diazenylbenzoate + 2 NADH + 2 H(+). Quinone reductase that provides resistance to thiol-specific stress caused by electrophilic quinones. Functionally, also exhibits azoreductase activity. Catalyzes the reductive cleavage of the azo bond in aromatic azo compounds to the corresponding amines. The sequence is that of FMN-dependent NADH:quinone oxidoreductase 2 from Clostridium perfringens (strain 13 / Type A).